The following is a 403-amino-acid chain: S-adenosylmethionine synthase (403 aa).

Histidine 15 is a binding site for ATP. Residue aspartate 17 coordinates Mg(2+). A K(+)-binding site is contributed by glutamate 43. Residues glutamate 56 and glutamine 99 each coordinate L-methionine. The tract at residues 99–109 (QSPHIAQGVDR) is flexible loop. ATP contacts are provided by residues 166–168 (DAK), 232–233 (KF), aspartate 241, 247–248 (RK), alanine 264, and lysine 268. Residue aspartate 241 participates in L-methionine binding. Lysine 272 serves as a coordination point for L-methionine.

It belongs to the AdoMet synthase family. As to quaternary structure, homotetramer; dimer of dimers. Requires Mg(2+) as cofactor. The cofactor is K(+).

It localises to the cytoplasm. It catalyses the reaction L-methionine + ATP + H2O = S-adenosyl-L-methionine + phosphate + diphosphate. It functions in the pathway amino-acid biosynthesis; S-adenosyl-L-methionine biosynthesis; S-adenosyl-L-methionine from L-methionine: step 1/1. Catalyzes the formation of S-adenosylmethionine (AdoMet) from methionine and ATP. The overall synthetic reaction is composed of two sequential steps, AdoMet formation and the subsequent tripolyphosphate hydrolysis which occurs prior to release of AdoMet from the enzyme. This is S-adenosylmethionine synthase from Stenotrophomonas maltophilia (strain R551-3).